The chain runs to 556 residues: Formate--tetrahydrofolate ligase (556 aa).

Residue 65–72 coordinates ATP; the sequence is TPAGEGKT.

It belongs to the formate--tetrahydrofolate ligase family.

The catalysed reaction is (6S)-5,6,7,8-tetrahydrofolate + formate + ATP = (6R)-10-formyltetrahydrofolate + ADP + phosphate. It functions in the pathway one-carbon metabolism; tetrahydrofolate interconversion. This is Formate--tetrahydrofolate ligase from Peptoclostridium acidaminophilum (Eubacterium acidaminophilum).